The chain runs to 151 residues: Large ribosomal subunit protein bL9 (151 aa).

This sequence belongs to the bacterial ribosomal protein bL9 family.

Its function is as follows. Binds to the 23S rRNA. The chain is Large ribosomal subunit protein bL9 from Nitrosospira multiformis (strain ATCC 25196 / NCIMB 11849 / C 71).